Here is a 517-residue protein sequence, read N- to C-terminus: Bifunctional purine biosynthesis protein PurH (517 aa).

The 146-residue stretch at 1 to 146 (MAPIALLSVS…KNHAHVAVLT (146 aa)) folds into the MGS-like domain.

The protein belongs to the PurH family.

The catalysed reaction is (6R)-10-formyltetrahydrofolate + 5-amino-1-(5-phospho-beta-D-ribosyl)imidazole-4-carboxamide = 5-formamido-1-(5-phospho-D-ribosyl)imidazole-4-carboxamide + (6S)-5,6,7,8-tetrahydrofolate. The enzyme catalyses IMP + H2O = 5-formamido-1-(5-phospho-D-ribosyl)imidazole-4-carboxamide. It participates in purine metabolism; IMP biosynthesis via de novo pathway; 5-formamido-1-(5-phospho-D-ribosyl)imidazole-4-carboxamide from 5-amino-1-(5-phospho-D-ribosyl)imidazole-4-carboxamide (10-formyl THF route): step 1/1. The protein operates within purine metabolism; IMP biosynthesis via de novo pathway; IMP from 5-formamido-1-(5-phospho-D-ribosyl)imidazole-4-carboxamide: step 1/1. This Prochlorococcus marinus (strain MIT 9303) protein is Bifunctional purine biosynthesis protein PurH.